The primary structure comprises 94 residues: Integration host factor subunit beta (94 aa).

Belongs to the bacterial histone-like protein family. Heterodimer of an alpha and a beta chain.

This protein is one of the two subunits of integration host factor, a specific DNA-binding protein that functions in genetic recombination as well as in transcriptional and translational control. In Citrobacter koseri (strain ATCC BAA-895 / CDC 4225-83 / SGSC4696), this protein is Integration host factor subunit beta.